Here is an 834-residue protein sequence, read N- to C-terminus: Mannosyl-oligosaccharide glucosidase (834 aa).

The segment covering 1-10 (MARGERRRRA) has biased composition (basic residues). The Cytoplasmic segment spans residues 1–36 (MARGERRRRAAAAEGARPLERARGAGRRDGRAGGAR). Positions 1 to 37 (MARGERRRRAAAAEGARPLERARGAGRRDGRAGGARG) are disordered. The short motif at 3–9 (RGERRRR) is the Endoplasmic reticulum targeting element. Positions 17–31 (RPLERARGAGRRDGR) are enriched in basic and acidic residues. Residues 37 to 57 (GSAGGAALAVVVLALAFGLSG) traverse the membrane as a helical; Signal-anchor for type II membrane protein segment. The Lumenal segment spans residues 58–834 (RWVLAWLGVR…LVLLIMAEEY (777 aa)). A required for endoplasmic reticulum targeting region spans residues 74–136 (PAPSALPPDS…GTPPKLRHTC (63 aa)). The Proton donor role is filled by Asp-580. Asn-654 carries an N-linked (GlcNAc...) asparagine glycan. Residue Glu-804 is the Proton acceptor of the active site.

Belongs to the glycosyl hydrolase 63 family.

The protein resides in the endoplasmic reticulum membrane. The catalysed reaction is N(4)-(alpha-D-Glc-(1-&gt;2)-alpha-D-Glc-(1-&gt;3)-alpha-D-Glc-(1-&gt;3)-alpha-D-Man-(1-&gt;2)-alpha-D-Man-(1-&gt;2)-alpha-D-Man-(1-&gt;3)-[alpha-D-Man-(1-&gt;2)-alpha-D-Man-(1-&gt;3)-[alpha-D-Man-(1-&gt;2)-alpha-D-Man-(1-&gt;6)]-alpha-D-Man-(1-&gt;6)]-beta-D-Man-(1-&gt;4)-beta-D-GlcNAc-(1-&gt;4)-beta-D-GlcNAc)-L-asparaginyl-[protein] + H2O = N(4)-(alpha-D-Glc-(1-&gt;3)-alpha-D-Glc-(1-&gt;3)-alpha-D-Man-(1-&gt;2)-alpha-D-Man-(1-&gt;2)-alpha-D-Man-(1-&gt;3)-[alpha-D-Man-(1-&gt;2)-alpha-D-Man-(1-&gt;3)-[alpha-D-Man-(1-&gt;2)-alpha-D-Man-(1-&gt;6)]-alpha-D-Man-(1-&gt;6)]-beta-D-Man-(1-&gt;4)-beta-D-GlcNAc-(1-&gt;4)-beta-D-GlcNAc)-L-asparaginyl-[protein] + beta-D-glucose. It functions in the pathway glycan metabolism; N-glycan degradation. Functionally, in the context of N-glycan degradation, cleaves the distal alpha 1,2-linked glucose residue from the Glc(3)Man(9)GlcNAc(2) oligosaccharide precursor in a highly specific manner. The protein is Mannosyl-oligosaccharide glucosidase of Rattus norvegicus (Rat).